The primary structure comprises 1272 residues: Regulator of nonsense transcripts 2 (1272 aa).

Basic and acidic residues predominate over residues 1 to 114 (MPAERKKPAS…QEEQAKRQQE (114 aa)). Disordered stretches follow at residues 1–126 (MPAE…EKEE), 370–389 (DHRE…HSKG), 423–445 (NMPD…DIFT), and 490–517 (CQNK…SPDD). Residues 54–134 (EDKKKRLEDD…EESIQLHQEA (81 aa)) are a coiled coil. Positions 94–133 (KKKHQEEERKKQEEQAKRQQEEEAAAQMKEKEESIQLHQE) are sufficient for interaction with UPF1. An MIF4G 1 domain is found at 168–431 (LKKNTAFVKK…ENMPDLPQDK (264 aa)). Composition is skewed to basic and acidic residues over residues 428–439 (PQDKPTPEEHGP) and 490–513 (CQNK…KEVS). Residues 487-559 (EKSCQNKESN…EQEQEDEEAS (73 aa)) adopt a coiled-coil conformation. 2 consecutive MIF4G domains span residues 569-758 (DAFL…CNPP) and 773-986 (EYVR…LRPK). Residues 711–928 (GRFLFRSPES…IRLVCTILDT (218 aa)) are sufficient for interaction with UPF3A and UPF3B. A sufficient for interaction with EIF4A1 and EIF1 region spans residues 757-1272 (PPPAEKTVKK…LIFKTGGRRR (516 aa)). A binds to UPF3B region spans residues 839 to 859 (EDVGIHVVDGVLEDIRLGMEV). Positions 1018-1098 (DSKDSMTEGE…DEENTEVMIK (81 aa)) are disordered. The span at 1027–1076 (ENLEEDEEEEEGGAETEEQSGNESEVNEPEEEEGSDNDDDEGEEEEEENT) shows a compositional bias: acidic residues. The segment at 1084–1272 (KENETDEENT…LIFKTGGRRR (189 aa)) is sufficient for interaction with UPF1 C-terminus. T1088 is modified (phosphothreonine). 2 interaction with UPF1 regions span residues 1105-1129 (VPCV…QQRS) and 1167-1207 (DTMP…AEQE). Residues 1105–1198 (VPCVEDEDFI…PMSSQLAANH (94 aa)) form a necessary for interaction with UPF1 region. A disordered region spans residues 1220-1272 (NERQEQEDYQEMLQSLAQRPAPANTNRERRPRYQHPKGAPNADLIFKTGGRRR).

In terms of assembly, found in a post-splicing messenger ribonucleoprotein (mRNP) complex. Associates with the exon junction complex (EJC). Interacts with SMG1, EST1A, UPF1, UPF3A, UPF3B, EIF4A1 and EIF1. Ubiquitous.

Its subcellular location is the cytoplasm. It is found in the perinuclear region. Involved in nonsense-mediated decay (NMD) of mRNAs containing premature stop codons by associating with the nuclear exon junction complex (EJC). Recruited by UPF3B associated with the EJC core at the cytoplasmic side of the nuclear envelope and the subsequent formation of an UPF1-UPF2-UPF3 surveillance complex (including UPF1 bound to release factors at the stalled ribosome) is believed to activate NMD. In cooperation with UPF3B stimulates both ATPase and RNA helicase activities of UPF1. Binds spliced mRNA. This Homo sapiens (Human) protein is Regulator of nonsense transcripts 2.